A 300-amino-acid chain; its full sequence is Acetaldehyde dehydrogenase 3 (300 aa).

Serine 11–isoleucine 14 is an NAD(+) binding site. Cysteine 126 acts as the Acyl-thioester intermediate in catalysis. Residues serine 157 to asparagine 165 and asparagine 276 contribute to the NAD(+) site.

The protein belongs to the acetaldehyde dehydrogenase family.

The enzyme catalyses acetaldehyde + NAD(+) + CoA = acetyl-CoA + NADH + H(+). The protein is Acetaldehyde dehydrogenase 3 of Rhodococcus opacus (strain B4).